The chain runs to 486 residues: Sensor protein PhoQ (486 aa).

Residues 1–16 (MKKLLHLFFPLSLRVR) are Cytoplasmic-facing. The helical transmembrane segment at 17–37 (FLLATAAVVLVLSLAYGMVAL) threads the bilayer. Residues 38–194 (IGYSVSFDKT…LKSSYMVWSW (157 aa)) lie on the Periplasmic side of the membrane. Residues aspartate 151 and aspartate 152 each contribute to the a divalent metal cation site. Residues 195-215 (FIYVLSANLLLVIPLLWVAAW) form a helical membrane-spanning segment. Residues 215-266 (WWSLRPIEALAKEVRELEEHNRELLNPATTRELTSLVRNLNRLLKSERERYD) form the HAMP domain. The Cytoplasmic segment spans residues 216–486 (WSLRPIEALA…GRQHSAPKDE (271 aa)). Residues 274–480 (DLTHSLKTPL…RMEVIFGRQH (207 aa)) enclose the Histidine kinase domain. Residue histidine 277 is modified to Phosphohistidine; by autocatalysis. Mg(2+) is bound at residue asparagine 385. Residues 385 to 393 (NVLDNACKY), 415 to 420 (DDGPGI), and 434 to 446 (RVDT…GVGL) each bind ATP. Residue glutamine 442 participates in Mg(2+) binding.

As to quaternary structure, homodimer.

It is found in the cell inner membrane. It carries out the reaction ATP + protein L-histidine = ADP + protein N-phospho-L-histidine.. In terms of biological role, member of the two-component regulatory system PhoP/PhoQ involved in virulence, adaptation to low Mg(2+) environments and the control of acid resistance genes. In low periplasmic Mg(2+), PhoQ functions as a membrane-associated protein kinase that undergoes autophosphorylation and subsequently transfers the phosphate to PhoP, resulting in the expression of PhoP-activated genes (PAG) and repression of PhoP-repressed genes (PRG). In high periplasmic Mg(2+), acts as a protein phosphatase that dephosphorylates phospho-PhoP, which results in the repression of PG and may lead to expression of some PRG. This is Sensor protein PhoQ (phoQ) from Escherichia coli O6:H1 (strain CFT073 / ATCC 700928 / UPEC).